The chain runs to 859 residues: Photoactivated adenylate cyclase subunit beta (859 aa).

The region spanning 56-149 (LRRLMYLSKS…GRMYGDWHMK (94 aa)) is the BLUF 1 domain. Residues 205–333 (VVTFIYLVEF…DCINTTSRIA (129 aa)) enclose the Guanylate cyclase 1 domain. Residues 420–443 (RPPIFDDTPKGNPRPRTPGYGGRQ) form a disordered region. Positions 471–563 (LTTLTYISQA…RVYPSEWTLT (93 aa)) constitute a BLUF 2 domain. One can recognise a Guanylate cyclase 2 domain in the interval 619-748 (VMLATDICSF…AVSARVMEVE (130 aa)). Positions 813–859 (AARSGEKPLTEPEEAKPDFRVSPGRVRHGDSGRRSNSAQGKRSIQVR) are disordered. The span at 815–831 (RSGEKPLTEPEEAKPDF) shows a compositional bias: basic and acidic residues. Over residues 846–859 (RSNSAQGKRSIQVR) the composition is skewed to polar residues.

Belongs to the adenylyl cyclase class-4/guanylyl cyclase family. In terms of assembly, heterotetramer of two alpha and two beta subunits. Requires FAD as cofactor.

It is found in the cell projection. It localises to the cilium. Its subcellular location is the flagellum. It carries out the reaction ATP = 3',5'-cyclic AMP + diphosphate. Activity increased by up to 80-fold under blue light. Its function is as follows. Acts as a blue light photoreceptor for the step-up photophobic response. Mediates photoavoidance. In Euglena gracilis, this protein is Photoactivated adenylate cyclase subunit beta.